We begin with the raw amino-acid sequence, 269 residues long: Bis(5'-nucleosyl)-tetraphosphatase, symmetrical (269 aa).

This sequence belongs to the Ap4A hydrolase family.

The enzyme catalyses P(1),P(4)-bis(5'-adenosyl) tetraphosphate + H2O = 2 ADP + 2 H(+). Functionally, hydrolyzes diadenosine 5',5'''-P1,P4-tetraphosphate to yield ADP. This Vibrio cholerae serotype O1 (strain ATCC 39541 / Classical Ogawa 395 / O395) protein is Bis(5'-nucleosyl)-tetraphosphatase, symmetrical.